The following is a 308-amino-acid chain: D-alanine--D-alanine ligase (308 aa).

The 201-residue stretch at K102–E302 folds into the ATP-grasp domain. An ATP-binding site is contributed by P128 to T183. The Mg(2+) site is built by D252, E269, and N271.

This sequence belongs to the D-alanine--D-alanine ligase family. Mg(2+) is required as a cofactor. Requires Mn(2+) as cofactor.

It localises to the cytoplasm. It carries out the reaction 2 D-alanine + ATP = D-alanyl-D-alanine + ADP + phosphate + H(+). The protein operates within cell wall biogenesis; peptidoglycan biosynthesis. In terms of biological role, cell wall formation. This is D-alanine--D-alanine ligase from Brucella anthropi (strain ATCC 49188 / DSM 6882 / CCUG 24695 / JCM 21032 / LMG 3331 / NBRC 15819 / NCTC 12168 / Alc 37) (Ochrobactrum anthropi).